Here is a 151-residue protein sequence, read N- to C-terminus: Deoxyuridine 5'-triphosphate nucleotidohydrolase (151 aa).

Residues 70 to 72 (RSG), N83, 87 to 89 (LID), and M97 each bind substrate.

Belongs to the dUTPase family. In terms of assembly, homotrimer. Mg(2+) serves as cofactor.

It carries out the reaction dUTP + H2O = dUMP + diphosphate + H(+). It participates in pyrimidine metabolism; dUMP biosynthesis; dUMP from dCTP (dUTP route): step 2/2. In terms of biological role, this enzyme is involved in nucleotide metabolism: it produces dUMP, the immediate precursor of thymidine nucleotides and it decreases the intracellular concentration of dUTP so that uracil cannot be incorporated into DNA. This chain is Deoxyuridine 5'-triphosphate nucleotidohydrolase, found in Escherichia coli O7:K1 (strain IAI39 / ExPEC).